Reading from the N-terminus, the 177-residue chain is Cytoglobin-1 (177 aa).

The region spanning 16-165 is the Globin domain; that stretch reads PLTDKERVMI…LCCSIKAVYE (150 aa). 2 residues coordinate heme b: His79 and His111.

This sequence belongs to the globin family. As to quaternary structure, monomeric.

Its subcellular location is the cytoplasm. The protein localises to the nucleus. It carries out the reaction Fe(II)-heme b-[protein] + nitric oxide + O2 = Fe(III)-heme b-[protein] + nitrate. The enzyme catalyses Fe(III)-heme b-[protein] + nitric oxide + H2O = Fe(II)-heme b-[protein] + nitrite + 2 H(+). It catalyses the reaction 2 superoxide + 2 H(+) = H2O2 + O2. The catalysed reaction is H2O2 + AH2 = A + 2 H2O. Probable multifunctional globin with a hexacoordinated heme iron required for the catalysis of various reactions depending on redox condition of the cell as well as oxygen availability. Has a nitric oxide dioxygenase (NOD) activity and is most probably involved in cell-mediated and oxygen-dependent nitric oxide consumption. Under normoxic conditions functions as a nitric oxide dioxygenase (NOD) but under hypoxic conditions the globin may switch its function to that of a nitrite (NO2) reductase (NiR), generating nitric oxide. Could also have peroxidase and superoxide dismutase activities, detoxifying reactive oxygen species and protecting cells against oxidative stress. Also binds dioxygen with low affinity and could function as an oxygen sensor but has probably no function as a respiratory oxygen carrier. This is Cytoglobin-1 from Oryzias latipes (Japanese rice fish).